Consider the following 282-residue polypeptide: NAD(P)H-hydrate epimerase (282 aa).

The transit peptide at 1-53 (MSGLRTLLGLGLLVAGSRLPRVISQQSVCRARPIWWGTQRRGSETMAGAAVKY) directs the protein to the mitochondrion. Position 43 is a phosphoserine; by PKA (Ser43). Residues 59-269 (AQAVDQELFN…ALEKKYQLNL (211 aa)) form the YjeF N-terminal domain. 113–117 (NNGGD) is a binding site for (6S)-NADPHX. Residue Asn114 coordinates K(+). Position 138 is an N6-succinyllysine (Lys138). Asp179 is a binding site for K(+). (6S)-NADPHX is bound by residues 183–189 (GFSFKGD) and Asp212. Ser215 is a binding site for K(+).

It belongs to the NnrE/AIBP family. Homodimer. Interacts with APOA1 and APOA2. K(+) serves as cofactor. Undergoes physiological phosphorylation during sperm capacitation, downstream to PKA activation. In terms of tissue distribution, detected in testis and sperm (at protein level). Expressed at high levels in heart, liver, kidney, and testis.

It localises to the mitochondrion. The protein resides in the secreted. The enzyme catalyses (6R)-NADHX = (6S)-NADHX. It carries out the reaction (6R)-NADPHX = (6S)-NADPHX. Its function is as follows. Catalyzes the epimerization of the S- and R-forms of NAD(P)HX, a damaged form of NAD(P)H that is a result of enzymatic or heat-dependent hydration. This is a prerequisite for the S-specific NAD(P)H-hydrate dehydratase to allow the repair of both epimers of NAD(P)HX. Accelerates cholesterol efflux from endothelial cells to high-density lipoprotein (HDL) and thereby regulates angiogenesis. This Mus musculus (Mouse) protein is NAD(P)H-hydrate epimerase.